A 598-amino-acid chain; its full sequence is Aspartate--tRNA(Asp/Asn) ligase (598 aa).

An L-aspartate-binding site is contributed by E174. An aspartate region spans residues 198–201 (QQLK). R220 is a binding site for L-aspartate. ATP contacts are provided by residues 220-222 (RDE) and Q229. An L-aspartate-binding site is contributed by H458. ATP is bound at residue E492. Residue R499 participates in L-aspartate binding. 544-547 (GIDR) contributes to the ATP binding site.

It belongs to the class-II aminoacyl-tRNA synthetase family. Type 1 subfamily. Homodimer.

Its subcellular location is the cytoplasm. It catalyses the reaction tRNA(Asx) + L-aspartate + ATP = L-aspartyl-tRNA(Asx) + AMP + diphosphate. Functionally, aspartyl-tRNA synthetase with relaxed tRNA specificity since it is able to aspartylate not only its cognate tRNA(Asp) but also tRNA(Asn). Reaction proceeds in two steps: L-aspartate is first activated by ATP to form Asp-AMP and then transferred to the acceptor end of tRNA(Asp/Asn). The sequence is that of Aspartate--tRNA(Asp/Asn) ligase from Dehalococcoides mccartyi (strain ATCC BAA-2100 / JCM 16839 / KCTC 5957 / BAV1).